Here is a 220-residue protein sequence, read N- to C-terminus: Flavin-dependent thymidylate synthase (220 aa).

Positions 1 to 208 (MKIDILDKGF…PWTFEAFLKY (208 aa)) constitute a ThyX domain. FAD contacts are provided by residues Thr-55, 78 to 80 (RHR), and Glu-86. Residues 75–78 (QWFR), 86–90 (ELSGR), and Arg-147 each bind dUMP. The ThyX motif signature appears at 78-88 (RHRIASYNELS). FAD is bound by residues 163–165 (NAR) and Asn-169. Residue Arg-174 participates in dUMP binding. The active-site Involved in ionization of N3 of dUMP, leading to its activation is Arg-174.

Belongs to the thymidylate synthase ThyX family. In terms of assembly, homotetramer. It depends on FAD as a cofactor.

It carries out the reaction dUMP + (6R)-5,10-methylene-5,6,7,8-tetrahydrofolate + NADPH + H(+) = dTMP + (6S)-5,6,7,8-tetrahydrofolate + NADP(+). It functions in the pathway pyrimidine metabolism; dTTP biosynthesis. Functionally, catalyzes the reductive methylation of 2'-deoxyuridine-5'-monophosphate (dUMP) to 2'-deoxythymidine-5'-monophosphate (dTMP) while utilizing 5,10-methylenetetrahydrofolate (mTHF) as the methyl donor, and NADPH and FADH(2) as the reductant. The chain is Flavin-dependent thymidylate synthase from Thermotoga petrophila (strain ATCC BAA-488 / DSM 13995 / JCM 10881 / RKU-1).